Here is a 20-residue protein sequence, read N- to C-terminus: Agglutinin beta-2 chain (20 aa).

Residues 1–20 form a disordered region; it reads GRNGKSQSIIVGPWGDRVTN.

It belongs to the jacalin lectin family. As to quaternary structure, formed of four alpha chains and four beta chains.

Functionally, D-galactose-specific lectin, binds the T-antigen structure Gal-beta1,3-GalNAc. This Maclura pomifera (Osage orange) protein is Agglutinin beta-2 chain.